The following is a 280-amino-acid chain: MAKRPALPSADLSPTSGFEAGEGDLFNGADERGFFAEPRSAPKKAARAVTATEQEADAAHYHGHRDRLRTRYRDGGDAALADYELLELLLFRLIPRRDTKPIAKALIARFGTLGSVLGAPLPLLQEVKGVGEAVALDLKLVASVSQRMLKSEIRNKQVLGSWSSVIDYCHAAMAHETREQFRILFLDKRNVLIADEVQGQGTVDHTPVYPREIVRRALELSSTALILIHNHPSGDPTPSRADIEMTKTIIDTAKPLGITVHDHIIIGKDGHASFKGLRLI.

The interval Met1–Glu22 is disordered. Residues Val158–Ile280 enclose the MPN domain. Zn(2+) contacts are provided by His229, His231, and Asp242. Positions His229–Asp242 match the JAMM motif motif.

This sequence belongs to the UPF0758 family.

This chain is UPF0758 protein Atu1607, found in Agrobacterium fabrum (strain C58 / ATCC 33970) (Agrobacterium tumefaciens (strain C58)).